Here is a 118-residue protein sequence, read N- to C-terminus: Thioredoxin-like protein CXXS1 (118 aa).

The Thioredoxin domain occupies alanine 2–glutamine 110.

The protein belongs to the thioredoxin family. Ubiquitous.

The protein localises to the cytoplasm. In terms of biological role, possesses low disulfide reductase activity, but efficient protein disulfide isomerase activity. Does not possess deglutathionylation activity. The sequence is that of Thioredoxin-like protein CXXS1 (CXXS1) from Arabidopsis thaliana (Mouse-ear cress).